The chain runs to 4061 residues: Hybrid PKS-NRPS synthetase tasS (4061 aa).

In terms of domain architecture, Ketosynthase family 3 (KS3) spans 7-472 (QEPIAVIGMA…GTNAHAIIEG (466 aa)). Cysteine 180 is a catalytic residue. Positions 586-911 (VFTGQGAQWP…RQKNDVEELL (326 aa)) are malonyl-CoA:ACP transacylase (MAT) domain. Residues 977 to 1113 (HPLLGRRCVE…ATVNVTFHEP (137 aa)) form an N-terminal hotdog fold region. A dehydratase (DH) domain region spans residues 977–1280 (HPLLGRRCVE…VRVQPFSVAG (304 aa)). One can recognise a PKS/mFAS DH domain in the interval 977–1282 (HPLLGRRCVE…VQPFSVAGPQ (306 aa)). Histidine 1010 serves as the catalytic Proton acceptor; for dehydratase activity. The segment at 1128 to 1282 (LANAEPQRLY…VQPFSVAGPQ (155 aa)) is C-terminal hotdog fold. Residue aspartate 1188 is the Proton donor; for dehydratase activity of the active site. A methyltransferase (MT) domain region spans residues 1425 to 1619 (LDRFYEEGFE…GFNGVETHTP (195 aa)). Positions 2153 to 2325 (TYFLLGLSGE…GVVGSDMAIG (173 aa)) are ketoreductase (KR) domain. Residues 2437-2516 (EAIKVVFDTF…LLVEEAVDKL (80 aa)) form the Carrier 1 domain. Serine 2475 carries the post-translational modification O-(pantetheine 4'-phosphoryl)serine. A disordered region spans residues 2527-2617 (EHGGEPDLTQ…QKHQEQTSQS (91 aa)). The segment covering 2556 to 2576 (TSAASSSDTGSDSSPTSNSVS) has biased composition (low complexity). The span at 2577-2592 (ETQTGTPLETPMSTTE) shows a compositional bias: polar residues. Positions 2632–3077 (QMTFGQNRFW…ELATWDTESE (446 aa)) are condensation (C) domain. The tract at residues 3103–3510 (QVIADHPDAV…RGYLTVEGRI (408 aa)) is adenylation (A) (KR) domain. The Carrier 2 domain occupies 3633–3712 (QNLTATERTL…SMAALLDDGV (80 aa)). The residue at position 3672 (serine 3672) is an O-(pantetheine 4'-phosphoryl)serine. The segment at 3813–3969 (DIDVVLHCAA…LSPLEDAVEA (157 aa)) is reductase (RED) domain.

In the C-terminal section; belongs to the NRP synthetase family.

It catalyses the reaction (2S,4S)-4-hydroxy-4-methylglutamate + 8 malonyl-CoA + 3 S-adenosyl-L-methionine + ATP + 8 NADPH + 11 H(+) = (2S)-3-[(2S)-3,5-dioxo-4-[(2E,4R,6R,8E,10E,12E)-4,6,12-trimethyltetradeca-2,8,10,12-tetraenoyl]pyrrolidin-2-yl]-2-hydroxy-2-methylpropanoate + AMP + 3 S-adenosyl-L-homocysteine + 8 CO2 + diphosphate + 8 NADP(+) + 8 CoA + 6 H2O. The protein operates within secondary metabolite biosynthesis. Functionally, hybrid PKS-NRPS synthetase; part of the gene cluster that mediates the biosynthesis of the tetramic acids Sch210971 and Sch210972, potential anti-HIV fungal natural product that contain a decalin core. The PKS module of tasS together with the enoylreductase tasC catalyze the formation of the polyketide unit which is then conjugated to 4-hydroxyl-4-methyl glutamate (HMG) by the condensation domain of the tasS NRPS module. One unique structural feature of Sch210971 and Sch210972 is the tetramic acid motif proposed to be derived from the non-proteinogenic amino acid HMG, by a Dieckmann-type condensation catalyzed by the reductase domain of tasS. The aldolase tasA catalyzes the aldol condensation of 2 molecules of pyruvic acid to yield the intermediate 4-hydroxyl-4-methyl-2-oxoglutarate (HMOG), which can then be stereoselectively transaminated, may be by tasG, to form HMG. The Diels-Alderase tas3 then uses the Dieckmann product of tasS as substrate and catalyzes the Diels-Alder cycloaddition to form the decalin ring of Sch210971 and Sch210972. This chain is Hybrid PKS-NRPS synthetase tasS, found in Hapsidospora irregularis.